The following is a 418-amino-acid chain: Gamma-glutamyl phosphate reductase (418 aa).

The protein belongs to the gamma-glutamyl phosphate reductase family.

The protein localises to the cytoplasm. It carries out the reaction L-glutamate 5-semialdehyde + phosphate + NADP(+) = L-glutamyl 5-phosphate + NADPH + H(+). It participates in amino-acid biosynthesis; L-proline biosynthesis; L-glutamate 5-semialdehyde from L-glutamate: step 2/2. In terms of biological role, catalyzes the NADPH-dependent reduction of L-glutamate 5-phosphate into L-glutamate 5-semialdehyde and phosphate. The product spontaneously undergoes cyclization to form 1-pyrroline-5-carboxylate. In Marinobacter nauticus (strain ATCC 700491 / DSM 11845 / VT8) (Marinobacter aquaeolei), this protein is Gamma-glutamyl phosphate reductase.